A 261-amino-acid polypeptide reads, in one-letter code: Small ribosomal subunit protein eS4z (261 aa).

Residues 42–104 enclose the S4 RNA-binding domain; it reads LPLVLIIRNR…TNENFRLLYD (63 aa).

This sequence belongs to the eukaryotic ribosomal protein eS4 family.

The protein resides in the cytoplasm. The chain is Small ribosomal subunit protein eS4z (RPS4A) from Arabidopsis thaliana (Mouse-ear cress).